Reading from the N-terminus, the 235-residue chain is Cytidylate kinase (235 aa).

An ATP-binding site is contributed by 11–19; the sequence is GPSGVGKST.

Belongs to the cytidylate kinase family. Type 1 subfamily.

The protein localises to the cytoplasm. It carries out the reaction CMP + ATP = CDP + ADP. The enzyme catalyses dCMP + ATP = dCDP + ADP. This Syntrophotalea carbinolica (strain DSM 2380 / NBRC 103641 / GraBd1) (Pelobacter carbinolicus) protein is Cytidylate kinase.